Reading from the N-terminus, the 498-residue chain is Galactose-1-phosphate uridylyltransferase (498 aa).

Belongs to the galactose-1-phosphate uridylyltransferase type 2 family.

Its subcellular location is the cytoplasm. The catalysed reaction is alpha-D-galactose 1-phosphate + UDP-alpha-D-glucose = alpha-D-glucose 1-phosphate + UDP-alpha-D-galactose. Its pathway is carbohydrate metabolism; galactose metabolism. The sequence is that of Galactose-1-phosphate uridylyltransferase from Clostridium perfringens (strain 13 / Type A).